The chain runs to 52 residues: ATP synthase protein 8 (52 aa).

The chain crosses the membrane as a helical span at residues 6 to 26 (PLLWLNLFLMFSATFVMFIVL).

This sequence belongs to the ATPase protein 8 family. In terms of assembly, F-type ATPases have 2 components, CF(1) - the catalytic core - and CF(0) - the membrane proton channel.

It localises to the mitochondrion membrane. Mitochondrial membrane ATP synthase (F(1)F(0) ATP synthase or Complex V) produces ATP from ADP in the presence of a proton gradient across the membrane which is generated by electron transport complexes of the respiratory chain. F-type ATPases consist of two structural domains, F(1) - containing the extramembraneous catalytic core and F(0) - containing the membrane proton channel, linked together by a central stalk and a peripheral stalk. During catalysis, ATP synthesis in the catalytic domain of F(1) is coupled via a rotary mechanism of the central stalk subunits to proton translocation. Part of the complex F(0) domain. Minor subunit located with subunit a in the membrane. The polypeptide is ATP synthase protein 8 (MT-ATP8) (Penaeus monodon (Giant tiger prawn)).